The chain runs to 698 residues: UvrABC system protein B (698 aa).

The Helicase ATP-binding domain occupies 25–183 (NGLNSGLVHQ…TLIDLQFERN (159 aa)). 38-45 (GATGTGKT) contacts ATP. The short motif at 91–114 (YYDAYTPEAYVPSKDLYIEKEAQI) is the Beta-hairpin element. The 167-residue stretch at 428–594 (QIDDLLGEIK…GIVKAVRDLT (167 aa)) folds into the Helicase C-terminal domain. Positions 622 to 657 (FKVINALEKQMKQAAKDLEFEKAALLRDQLTEMRQT) constitute a UVR domain.

Belongs to the UvrB family. Forms a heterotetramer with UvrA during the search for lesions. Interacts with UvrC in an incision complex.

It is found in the cytoplasm. The UvrABC repair system catalyzes the recognition and processing of DNA lesions. A damage recognition complex composed of 2 UvrA and 2 UvrB subunits scans DNA for abnormalities. Upon binding of the UvrA(2)B(2) complex to a putative damaged site, the DNA wraps around one UvrB monomer. DNA wrap is dependent on ATP binding by UvrB and probably causes local melting of the DNA helix, facilitating insertion of UvrB beta-hairpin between the DNA strands. Then UvrB probes one DNA strand for the presence of a lesion. If a lesion is found the UvrA subunits dissociate and the UvrB-DNA preincision complex is formed. This complex is subsequently bound by UvrC and the second UvrB is released. If no lesion is found, the DNA wraps around the other UvrB subunit that will check the other stand for damage. The protein is UvrABC system protein B of Herpetosiphon aurantiacus (strain ATCC 23779 / DSM 785 / 114-95).